The chain runs to 268 residues: Glutamine amidotransferase-like class 1 domain-containing protein 3, mitochondrial (268 aa).

The transit peptide at 1–41 directs the protein to the mitochondrion; that stretch reads MAAVRVLVASRLAAASAFTSLSPGGRTPSQRAALHLSVPRP. Lys-151, Lys-157, and Lys-164 each carry N6-acetyllysine. Lys-203 bears the N6-acetyllysine; alternate mark. N6-succinyllysine; alternate is present on Lys-203. Residue Lys-219 is modified to N6-acetyllysine. Lys-223 and Lys-233 each carry N6-acetyllysine; alternate. Lys-223 and Lys-233 each carry N6-succinyllysine; alternate.

It belongs to the GATD3 family.

It is found in the mitochondrion. The chain is Glutamine amidotransferase-like class 1 domain-containing protein 3, mitochondrial from Homo sapiens (Human).